We begin with the raw amino-acid sequence, 256 residues long: MLTLIPLPAFEDNYIWVWHDAKYAVAVDPGDPAVLSTYLDSRGLALAAVLVTHHHRDHTGGNTWLRQRYNCAIYAPDNPRIPAVSHVVRGGDSVAVPELGLALAVLATPGHTLDHVSYVGNGHLFCGDTLFGCGCGKLFEGDAAMMSASLDALAALPPTTRVCCAHEYTLSNIDFAKTIDGANPALLERERIDRAARAQNRPTLPSTLALERTTNPFLRFHDADMRAFAVGELGSPDPGPATVFGAIRAAKDRWDG.

The Zn(2+) site is built by His53, His55, Asp57, His58, His111, Asp128, and His166.

The protein belongs to the metallo-beta-lactamase superfamily. Glyoxalase II family. Monomer. The cofactor is Zn(2+).

The enzyme catalyses an S-(2-hydroxyacyl)glutathione + H2O = a 2-hydroxy carboxylate + glutathione + H(+). It functions in the pathway secondary metabolite metabolism; methylglyoxal degradation; (R)-lactate from methylglyoxal: step 2/2. Its function is as follows. Thiolesterase that catalyzes the hydrolysis of S-D-lactoyl-glutathione to form glutathione and D-lactic acid. This Thiobacillus denitrificans (strain ATCC 25259 / T1) protein is Hydroxyacylglutathione hydrolase.